The sequence spans 515 residues: Glucose-6-phosphate 1-dehydrogenase (515 aa).

NADP(+) contacts are provided by arginine 53 and lysine 160. Substrate is bound by residues histidine 190, lysine 194, glutamate 228, and aspartate 247. Residue histidine 252 is the Proton acceptor of the active site. Substrate is bound at residue lysine 352.

It belongs to the glucose-6-phosphate dehydrogenase family.

It carries out the reaction D-glucose 6-phosphate + NADP(+) = 6-phospho-D-glucono-1,5-lactone + NADPH + H(+). Its pathway is carbohydrate degradation; pentose phosphate pathway; D-ribulose 5-phosphate from D-glucose 6-phosphate (oxidative stage): step 1/3. Catalyzes the oxidation of glucose 6-phosphate to 6-phosphogluconolactone. In Treponema pallidum (strain Nichols), this protein is Glucose-6-phosphate 1-dehydrogenase.